Reading from the N-terminus, the 186-residue chain is Trafficking protein particle complex subunit 3 (186 aa).

Belongs to the TRAPP small subunits family. BET3 subfamily. Homodimer. Part of the multisubunit TRAPP (transport protein particle) complex.

Its subcellular location is the golgi apparatus. It localises to the cis-Golgi network. The protein resides in the endoplasmic reticulum. May play a role in vesicular transport from endoplasmic reticulum to Golgi. The polypeptide is Trafficking protein particle complex subunit 3 (trappc3) (Dictyostelium discoideum (Social amoeba)).